The chain runs to 311 residues: tRNA-cytidine(32) 2-sulfurtransferase (311 aa).

Positions 47-52 (SGGKDS) match the PP-loop motif motif. The [4Fe-4S] cluster site is built by Cys-122, Cys-125, and Cys-213.

Belongs to the TtcA family. In terms of assembly, homodimer. Mg(2+) is required as a cofactor. Requires [4Fe-4S] cluster as cofactor.

The protein resides in the cytoplasm. It catalyses the reaction cytidine(32) in tRNA + S-sulfanyl-L-cysteinyl-[cysteine desulfurase] + AH2 + ATP = 2-thiocytidine(32) in tRNA + L-cysteinyl-[cysteine desulfurase] + A + AMP + diphosphate + H(+). Its pathway is tRNA modification. Its function is as follows. Catalyzes the ATP-dependent 2-thiolation of cytidine in position 32 of tRNA, to form 2-thiocytidine (s(2)C32). The sulfur atoms are provided by the cysteine/cysteine desulfurase (IscS) system. The polypeptide is tRNA-cytidine(32) 2-sulfurtransferase (Klebsiella pneumoniae subsp. pneumoniae (strain ATCC 700721 / MGH 78578)).